We begin with the raw amino-acid sequence, 114 residues long: Iron-sulfur cluster assembly protein CyaY (114 aa).

The protein belongs to the frataxin family.

In terms of biological role, involved in iron-sulfur (Fe-S) cluster assembly. May act as a regulator of Fe-S biogenesis. This chain is Iron-sulfur cluster assembly protein CyaY, found in Ralstonia pickettii (strain 12J).